We begin with the raw amino-acid sequence, 115 residues long: Large ribosomal subunit protein bL20 (115 aa).

The protein belongs to the bacterial ribosomal protein bL20 family.

Binds directly to 23S ribosomal RNA and is necessary for the in vitro assembly process of the 50S ribosomal subunit. It is not involved in the protein synthesizing functions of that subunit. This chain is Large ribosomal subunit protein bL20, found in Parasynechococcus marenigrum (strain WH8102).